A 335-amino-acid polypeptide reads, in one-letter code: Prepilin leader peptidase/N-methyltransferase (335 aa).

The chain crosses the membrane as a helical span at residues 13–33; it reads LFAVFLFVLGLCVGSFLNVVI. Residues C49, C52, C74, and C77 each contribute to the Zn(2+) site. The next 5 helical transmembrane spans lie at 105-125, 131-151, 206-226, 258-278, and 299-319; these read WTYELVPALVLVSLLVPLAFI, ILPLSMTVPGMLAGIALAFPL, LLGVLLFASMQGAVVGILMLL, PGLPLWKRLLLVPVCLLVQPI, and IPFGPWLALAGLELLLLGPWL.

The protein belongs to the peptidase A24 family. Zn(2+) serves as cofactor.

It is found in the cell inner membrane. It carries out the reaction Typically cleaves a -Gly-|-Phe- bond to release an N-terminal, basic peptide of 5-8 residues from type IV prepilin, and then N-methylates the new N-terminal amino group, the methyl donor being S-adenosyl-L-methionine.. Its function is as follows. Plays an essential role in type IV pili and type II pseudopili formation by proteolytically removing the leader sequence from substrate proteins and subsequently monomethylating the alpha-amino group of the newly exposed N-terminal phenylalanine. This chain is Prepilin leader peptidase/N-methyltransferase (pilD), found in Myxococcus xanthus (strain DK1622).